The sequence spans 261 residues: Hydroxyethylthiazole kinase (261 aa).

Methionine 38 is a substrate binding site. Arginine 114 and threonine 159 together coordinate ATP. Glycine 186 serves as a coordination point for substrate.

This sequence belongs to the Thz kinase family. It depends on Mg(2+) as a cofactor.

It carries out the reaction 5-(2-hydroxyethyl)-4-methylthiazole + ATP = 4-methyl-5-(2-phosphooxyethyl)-thiazole + ADP + H(+). Its pathway is cofactor biosynthesis; thiamine diphosphate biosynthesis; 4-methyl-5-(2-phosphoethyl)-thiazole from 5-(2-hydroxyethyl)-4-methylthiazole: step 1/1. Catalyzes the phosphorylation of the hydroxyl group of 4-methyl-5-beta-hydroxyethylthiazole (THZ). In Streptococcus suis (strain 05ZYH33), this protein is Hydroxyethylthiazole kinase.